Here is a 463-residue protein sequence, read N- to C-terminus: MRFYNTLSKHIEEFKENEPGIVRMYVCGPTVYGLIHIGNARPMVVFDALRRYLEYRGYRVIMVQNFTDIDDKIINKSIEFSVDFKDISETFIAEYWRDSMALGVRAPNFSPKTSDFVPEIINAIQNLIAKNHAYVVDGDVYFSVRSFPRYGELSHRSIDELKAGARIDLNEKKRDPLDFALWKSAKPGEPYWKSPWGNGRPGWHIECSVMSTKLLGTTLDIHAGGEDLIFPHHENEKAQSEALTGKTFVKYWLHNGMIKYTGDKMSKSTGNIFLLREALKKYGADALKIFFLSKHYRSPIEFSEKALSSAAKAATRINETFLRFESEFSFAIPKQDSWINEKRSIFIDSLDDDFNTPRALALIFELVNSLNRAMDDGNERDALKIYHLLRREFCPVLGLFDLPERADNRSIEELVKILIDVRAELRAKKQYELSDMIRSKLRKVGIELKDMPQGTTYTFIKEV.

Cys-27 contributes to the Zn(2+) binding site. Positions Pro-29–Asn-39 match the 'HIGH' region motif. The Zn(2+) site is built by Cys-207, His-232, and Glu-236. Residues Lys-264–Ser-268 carry the 'KMSKS' region motif. Lys-267 is a binding site for ATP.

This sequence belongs to the class-I aminoacyl-tRNA synthetase family. Monomer. Zn(2+) serves as cofactor.

The protein resides in the cytoplasm. It catalyses the reaction tRNA(Cys) + L-cysteine + ATP = L-cysteinyl-tRNA(Cys) + AMP + diphosphate. This chain is Cysteine--tRNA ligase, found in Pseudothermotoga lettingae (strain ATCC BAA-301 / DSM 14385 / NBRC 107922 / TMO) (Thermotoga lettingae).